A 512-amino-acid polypeptide reads, in one-letter code: ETS translocation variant 3 (512 aa).

Positions 35-116 form a DNA-binding region, ETS; it reads IQLWHFILEL…KGKRFTYKFN (82 aa). A disordered region spans residues 136-222; it reads VPQSAPPVPT…NAIGGGGIGH (87 aa). 3 positions are modified to phosphoserine: Ser139, Ser159, and Ser315. Polar residues predominate over residues 158–184; it reads HSPTNDVQPGRFSASSLTASGQESSNG. Positions 336–512 are disordered; the sequence is PEESTQFSIK…QGLATAAADA (177 aa). 3 stretches are compositionally biased toward basic and acidic residues: residues 380-406, 453-468, and 479-491; these read IKVE…HTQE, DRPG…KEDA, and RWND…ELSK. Lys381 participates in a covalent cross-link: Glycyl lysine isopeptide (Lys-Gly) (interchain with G-Cter in SUMO2). The residue at position 388 (Lys388) is an N6-acetyllysine; alternate. Residue Lys388 forms a Glycyl lysine isopeptide (Lys-Gly) (interchain with G-Cter in SUMO2); alternate linkage.

This sequence belongs to the ETS family.

It localises to the nucleus. Transcriptional repressor that contribute to growth arrest during terminal macrophage differentiation by repressing target genes involved in Ras-dependent proliferation. Represses MMP1 promoter activity. In Homo sapiens (Human), this protein is ETS translocation variant 3 (ETV3).